Reading from the N-terminus, the 1025-residue chain is Retrovirus-related Pol polyprotein from type-1 retrotransposable element R2 (1025 aa).

The span at 1-11 (NQIKKSNTSTG) shows a compositional bias: polar residues. A disordered region spans residues 1–38 (NQIKKSNTSTGARIPKAMTNPADNFAGGQWKPPGRRSA). Residues 46–69 (FVCEHCLRAFTTNTGRGLHIKRAH) form a C2H2-type zinc finger. Basic and acidic residues predominate over residues 146-158 (NRARETELTRLET). The tract at residues 146 to 172 (NRARETELTRLETADEDPASQEQDNPN) is disordered. A Reverse transcriptase domain is found at 358 to 635 (MIMYHGQCPR…DQWKYLGVVY (278 aa)). The tract at residues 755 to 1025 (SLLGGDWVAE…YRTERRRTAN (271 aa)) is nucleic acid-binding endonuclease.

The catalysed reaction is DNA(n) + a 2'-deoxyribonucleoside 5'-triphosphate = DNA(n+1) + diphosphate. The polypeptide is Retrovirus-related Pol polyprotein from type-1 retrotransposable element R2 (Nasonia vitripennis (Parasitic wasp)).